A 145-amino-acid polypeptide reads, in one-letter code: LIRP (145 aa).

Residues 1-19 constitute a signal peptide (or 22); the sequence is MWKLCLRLLAVLAVCLSTA. 2 consecutive propeptides follow at residues 20–33 and 117–122; these read TQAQ…SPKR and FRRRTR. 3 disulfide bridges follow: cysteine 44–cysteine 129, cysteine 56–cysteine 142, and cysteine 128–cysteine 133.

It belongs to the insulin family. Heterodimer of a B chain and an A chain linked by two disulfide bonds.

It is found in the secreted. This Locusta migratoria (Migratory locust) protein is LIRP.